The following is a 136-amino-acid chain: ATP synthase epsilon chain, chloroplastic (136 aa).

This sequence belongs to the ATPase epsilon chain family. In terms of assembly, F-type ATPases have 2 components, CF(1) - the catalytic core - and CF(0) - the membrane proton channel. CF(1) has five subunits: alpha(3), beta(3), gamma(1), delta(1), epsilon(1). CF(0) has three main subunits: a, b and c.

The protein localises to the plastid. It is found in the chloroplast thylakoid membrane. Produces ATP from ADP in the presence of a proton gradient across the membrane. The sequence is that of ATP synthase epsilon chain, chloroplastic from Chaetosphaeridium globosum (Charophycean green alga).